Here is a 360-residue protein sequence, read N- to C-terminus: A-type ATP synthase subunit C (360 aa).

The protein belongs to the V-ATPase V0D/AC39 subunit family. In terms of assembly, has multiple subunits, A(3), B(3), C, D, E, F, G, I and K(x); there may be a few other subunits as well.

The protein localises to the cell membrane. Component of the A-type ATP synthase that produces ATP from ADP in the presence of a proton gradient across the membrane. The polypeptide is A-type ATP synthase subunit C (Methanosarcina mazei (strain ATCC BAA-159 / DSM 3647 / Goe1 / Go1 / JCM 11833 / OCM 88) (Methanosarcina frisia)).